The sequence spans 88 residues: MSSFDKTMKFNFSDDSAETNVNEVLITVYDALQEKGYNPINQIVGYLLSGDPAYIPRHRDARNLIRKLERDELIEELVKSYLEQHKEA.

It belongs to the UPF0297 family.

The polypeptide is UPF0297 protein YrzL (yrzL) (Bacillus subtilis (strain 168)).